Reading from the N-terminus, the 217-residue chain is Zinc finger CCHC-type and RNA-binding motif-containing protein 1 (217 aa).

An RRM domain is found at 10 to 88; sequence STVYVSNLPF…RVIKASIAID (79 aa). The CCHC-type zinc-finger motif lies at 105-122; sequence SKCYECGESGHLSYACPK. Positions 120–217 are disordered; the sequence is CPKNMLGERE…YFSDEEELSD (98 aa). Over residues 145-163 the composition is skewed to acidic residues; it reads PEEEIEEVEESEDEGEDPA. Residues serine 155, serine 210, and serine 216 each carry the phosphoserine modification.

As to quaternary structure, component of the U11/U12 snRNPs that are part of the U12-type spliceosome.

The protein localises to the nucleus. The protein resides in the nucleoplasm. This chain is Zinc finger CCHC-type and RNA-binding motif-containing protein 1 (ZCRB1), found in Homo sapiens (Human).